A 370-amino-acid chain; its full sequence is Spermidine/putrescine import ATP-binding protein PotA (370 aa).

Positions 6–236 (IELHQVTKRY…PINHFVADFI (231 aa)) constitute an ABC transporter domain. Residue 38–45 (GPSGCGKT) participates in ATP binding.

The protein belongs to the ABC transporter superfamily. Spermidine/putrescine importer (TC 3.A.1.11.1) family. As to quaternary structure, the complex is composed of two ATP-binding proteins (PotA), two transmembrane proteins (PotB and PotC) and a solute-binding protein (PotD).

The protein resides in the cell membrane. It catalyses the reaction ATP + H2O + polyamine-[polyamine-binding protein]Side 1 = ADP + phosphate + polyamineSide 2 + [polyamine-binding protein]Side 1.. In terms of biological role, part of the ABC transporter complex PotABCD involved in spermidine/putrescine import. Responsible for energy coupling to the transport system. In Levilactobacillus brevis (strain ATCC 367 / BCRC 12310 / CIP 105137 / JCM 1170 / LMG 11437 / NCIMB 947 / NCTC 947) (Lactobacillus brevis), this protein is Spermidine/putrescine import ATP-binding protein PotA.